Here is a 296-residue protein sequence, read N- to C-terminus: Ribonuclease HIII (296 aa).

Residues 80 to 296 (LALIGSDEVG…NTKKAYQRLK (217 aa)) form the RNase H type-2 domain. Asp86, Glu87, and Asp191 together coordinate a divalent metal cation.

The protein belongs to the RNase HII family. RnhC subfamily. The cofactor is Mn(2+). It depends on Mg(2+) as a cofactor.

It is found in the cytoplasm. It carries out the reaction Endonucleolytic cleavage to 5'-phosphomonoester.. Its function is as follows. Endonuclease that specifically degrades the RNA of RNA-DNA hybrids. The sequence is that of Ribonuclease HIII from Streptococcus thermophilus (strain CNRZ 1066).